Consider the following 195-residue polypeptide: Peroxiredoxin bcp1 (195 aa).

In terms of domain architecture, Thioredoxin spans 46-168; that stretch reads IQVGDVIPDI…SHWIFEKGTG (123 aa). Cys89 serves as the catalytic Cysteine sulfenic acid (-SOH) intermediate. Cys89 and Cys94 are disulfide-bonded.

This sequence belongs to the peroxiredoxin family. BCP/PrxQ subfamily. Monomer. The active site is a conserved redox-active cysteine residue, the peroxidatic cysteine (C(P)), which makes the nucleophilic attack on the peroxide substrate. The peroxide oxidizes the C(P)-SH to cysteine sulfenic acid (C(P)-SOH), which then reacts with another cysteine residue, the resolving cysteine (C(R)), to form a disulfide bridge. The disulfide is subsequently reduced by an appropriate electron donor to complete the catalytic cycle. In this atypical 2-Cys peroxiredoxin, C(R) is present in the same subunit to form an intramolecular disulfide. The disulfide is subsequently reduced by thioredoxin.

It localises to the cytoplasm. The protein localises to the nucleus. It catalyses the reaction a hydroperoxide + [thioredoxin]-dithiol = an alcohol + [thioredoxin]-disulfide + H2O. Thiol-specific peroxidase that catalyzes the reduction of hydrogen peroxide and organic hydroperoxides to water and alcohols, respectively. Plays a role in cell protection against oxidative stress by detoxifying peroxides and as sensor of hydrogen peroxide-mediated signaling events. Acts as a scavenger of H(2)O(2). The polypeptide is Peroxiredoxin bcp1 (bcp1) (Schizosaccharomyces pombe (strain 972 / ATCC 24843) (Fission yeast)).